Reading from the N-terminus, the 594-residue chain is Aspartate--tRNA(Asp/Asn) ligase (594 aa).

An L-aspartate-binding site is contributed by E175. An aspartate region spans residues Q199–K202. L-aspartate contacts are provided by R221 and H454. R221 to E223 lines the ATP pocket. ATP is bound at residue E488. R495 serves as a coordination point for L-aspartate. An ATP-binding site is contributed by G540–R543.

It belongs to the class-II aminoacyl-tRNA synthetase family. Type 1 subfamily. Homodimer.

The protein localises to the cytoplasm. The catalysed reaction is tRNA(Asx) + L-aspartate + ATP = L-aspartyl-tRNA(Asx) + AMP + diphosphate. Functionally, aspartyl-tRNA synthetase with relaxed tRNA specificity since it is able to aspartylate not only its cognate tRNA(Asp) but also tRNA(Asn). Reaction proceeds in two steps: L-aspartate is first activated by ATP to form Asp-AMP and then transferred to the acceptor end of tRNA(Asp/Asn). In Chelativorans sp. (strain BNC1), this protein is Aspartate--tRNA(Asp/Asn) ligase.